The sequence spans 314 residues: Methionyl-tRNA formyltransferase (314 aa).

110 to 113 (SLLP) provides a ligand contact to (6S)-5,6,7,8-tetrahydrofolate.

It belongs to the Fmt family.

The enzyme catalyses L-methionyl-tRNA(fMet) + (6R)-10-formyltetrahydrofolate = N-formyl-L-methionyl-tRNA(fMet) + (6S)-5,6,7,8-tetrahydrofolate + H(+). Attaches a formyl group to the free amino group of methionyl-tRNA(fMet). The formyl group appears to play a dual role in the initiator identity of N-formylmethionyl-tRNA by promoting its recognition by IF2 and preventing the misappropriation of this tRNA by the elongation apparatus. In Bacillus cereus (strain ATCC 14579 / DSM 31 / CCUG 7414 / JCM 2152 / NBRC 15305 / NCIMB 9373 / NCTC 2599 / NRRL B-3711), this protein is Methionyl-tRNA formyltransferase.